The following is a 1409-amino-acid chain: DNA-directed RNA polymerase subunit beta' (1409 aa).

Zn(2+) contacts are provided by C70, C72, C85, and C88. D461, D463, and D465 together coordinate Mg(2+). Residues C820, C894, C901, and C904 each contribute to the Zn(2+) site.

This sequence belongs to the RNA polymerase beta' chain family. As to quaternary structure, the RNAP catalytic core consists of 2 alpha, 1 beta, 1 beta' and 1 omega subunit. When a sigma factor is associated with the core the holoenzyme is formed, which can initiate transcription. The cofactor is Mg(2+). Requires Zn(2+) as cofactor.

It carries out the reaction RNA(n) + a ribonucleoside 5'-triphosphate = RNA(n+1) + diphosphate. Its function is as follows. DNA-dependent RNA polymerase catalyzes the transcription of DNA into RNA using the four ribonucleoside triphosphates as substrates. The chain is DNA-directed RNA polymerase subunit beta' from Ralstonia nicotianae (strain ATCC BAA-1114 / GMI1000) (Ralstonia solanacearum).